The following is a 550-amino-acid chain: Hydroxylamine reductase (550 aa).

The [2Fe-2S] cluster site is built by Cys3, Cys6, Cys18, and Cys25. Hybrid [4Fe-2O-2S] cluster-binding residues include His249, Glu273, Cys317, Cys405, Cys433, Cys458, Glu492, and Lys494. The residue at position 405 (Cys405) is a Cysteine persulfide.

It belongs to the HCP family. [2Fe-2S] cluster serves as cofactor. The cofactor is hybrid [4Fe-2O-2S] cluster.

Its subcellular location is the cytoplasm. It carries out the reaction A + NH4(+) + H2O = hydroxylamine + AH2 + H(+). Catalyzes the reduction of hydroxylamine to form NH(3) and H(2)O. This Escherichia coli (strain SE11) protein is Hydroxylamine reductase.